A 601-amino-acid chain; its full sequence is Testis-specific gene 10 protein (601 aa).

The span at 1–10 shows a compositional bias: basic residues; that stretch reads MMRSRSKSPR. Disordered stretches follow at residues 1–20 and 563–588; these read MMRS…RGAN and VSST…DRGL. The interval 459–592 is interaction with HIF1A; sequence QMTNERISMQ…SPDRGLDRSL (134 aa). The segment covering 563–573 has biased composition (polar residues); that stretch reads VSSTMKPNTKC. The segment covering 574 to 588 has biased composition (basic and acidic residues); the sequence is HSPERAHHRSPDRGL. Ser591 bears the Phosphoserine mark.

Belongs to the CEP135/TSGA10 family. In terms of assembly, interacts with HIF1A. In terms of processing, processed into N-terminal 27-kDa and C-terminal 55-kDa fragments.

It localises to the cytoplasm. Its subcellular location is the cytoskeleton. It is found in the microtubule organizing center. The protein resides in the centrosome. The protein localises to the centriole. Its function is as follows. Plays a role in spermatogenesis. When overexpressed, prevents nuclear localization of HIF1A. The sequence is that of Testis-specific gene 10 protein (TSGA10) from Macaca fascicularis (Crab-eating macaque).